A 147-amino-acid polypeptide reads, in one-letter code: Small ribosomal subunit protein uS12 (147 aa).

It belongs to the universal ribosomal protein uS12 family. Part of the 30S ribosomal subunit.

With S4 and S5 plays an important role in translational accuracy. Located at the interface of the 30S and 50S subunits. The sequence is that of Small ribosomal subunit protein uS12 from Methanococcus aeolicus (strain ATCC BAA-1280 / DSM 17508 / OCM 812 / Nankai-3).